A 337-amino-acid polypeptide reads, in one-letter code: Glyceraldehyde-3-phosphate dehydrogenase (337 aa).

Residues arginine 12–isoleucine 13, aspartate 34, and lysine 79 contribute to the NAD(+) site. Residues serine 150–threonine 152, threonine 181, threonine 210–glycine 211, and arginine 233 contribute to the D-glyceraldehyde 3-phosphate site. The Nucleophile role is filled by cysteine 151. Residue asparagine 315 coordinates NAD(+).

Belongs to the glyceraldehyde-3-phosphate dehydrogenase family. Homotetramer. As to expression, expressed in all tissues examined.

It is found in the cytoplasm. It catalyses the reaction D-glyceraldehyde 3-phosphate + phosphate + NAD(+) = (2R)-3-phospho-glyceroyl phosphate + NADH + H(+). It functions in the pathway carbohydrate degradation; glycolysis; pyruvate from D-glyceraldehyde 3-phosphate: step 1/5. The chain is Glyceraldehyde-3-phosphate dehydrogenase (gpd) from Lentinula edodes (Shiitake mushroom).